Here is a 62-residue protein sequence, read N- to C-terminus: Photosystem II reaction center protein Z (62 aa).

Transmembrane regions (helical) follow at residues 8 to 28 (AVFA…VVFA) and 41 to 61 (FSGT…NSLI).

Belongs to the PsbZ family. PSII is composed of 1 copy each of membrane proteins PsbA, PsbB, PsbC, PsbD, PsbE, PsbF, PsbH, PsbI, PsbJ, PsbK, PsbL, PsbM, PsbT, PsbY, PsbZ, Psb30/Ycf12, at least 3 peripheral proteins of the oxygen-evolving complex and a large number of cofactors. It forms dimeric complexes.

The protein localises to the plastid. It localises to the chloroplast thylakoid membrane. May control the interaction of photosystem II (PSII) cores with the light-harvesting antenna, regulates electron flow through the 2 photosystem reaction centers. PSII is a light-driven water plastoquinone oxidoreductase, using light energy to abstract electrons from H(2)O, generating a proton gradient subsequently used for ATP formation. The chain is Photosystem II reaction center protein Z from Amborella trichopoda.